Consider the following 162-residue polypeptide: NADH-quinone oxidoreductase subunit I 1 (162 aa).

2 consecutive 4Fe-4S ferredoxin-type domains span residues 52 to 82 (LRRYPNGEERCIACKLCEAVCPAQAITIEAG) and 93 to 122 (VRYDIDMVKCIYCGFCQEACPVDAIVEGPN). 8 residues coordinate [4Fe-4S] cluster: Cys-62, Cys-65, Cys-68, Cys-72, Cys-102, Cys-105, Cys-108, and Cys-112.

This sequence belongs to the complex I 23 kDa subunit family. In terms of assembly, NDH-1 is composed of 14 different subunits. Subunits NuoA, H, J, K, L, M, N constitute the membrane sector of the complex. The cofactor is [4Fe-4S] cluster.

It is found in the cell inner membrane. The catalysed reaction is a quinone + NADH + 5 H(+)(in) = a quinol + NAD(+) + 4 H(+)(out). In terms of biological role, NDH-1 shuttles electrons from NADH, via FMN and iron-sulfur (Fe-S) centers, to quinones in the respiratory chain. The immediate electron acceptor for the enzyme in this species is believed to be ubiquinone. Couples the redox reaction to proton translocation (for every two electrons transferred, four hydrogen ions are translocated across the cytoplasmic membrane), and thus conserves the redox energy in a proton gradient. This Rhodopseudomonas palustris (strain ATCC BAA-98 / CGA009) protein is NADH-quinone oxidoreductase subunit I 1.